Consider the following 274-residue polypeptide: Large ribosomal subunit protein uL2cy (274 aa).

2 disordered regions span residues 1–20 (MAIH…AVDS) and 224–274 (NPVD…RRSK).

The protein belongs to the universal ribosomal protein uL2 family. In terms of assembly, part of the 50S ribosomal subunit.

The protein localises to the plastid. The protein resides in the chloroplast. This is Large ribosomal subunit protein uL2cy (rpl2-B) from Populus alba (White poplar).